A 320-amino-acid chain; its full sequence is Cytochrome f (320 aa).

The signal sequence occupies residues methionine 1–alanine 35. Tyrosine 36, cysteine 56, cysteine 59, and histidine 60 together coordinate heme. Residues valine 286–lysine 306 traverse the membrane as a helical segment.

Belongs to the cytochrome f family. In terms of assembly, the 4 large subunits of the cytochrome b6-f complex are cytochrome b6, subunit IV (17 kDa polypeptide, petD), cytochrome f and the Rieske protein, while the 4 small subunits are PetG, PetL, PetM and PetN. The complex functions as a dimer. It depends on heme as a cofactor.

The protein localises to the plastid. It localises to the chloroplast thylakoid membrane. Component of the cytochrome b6-f complex, which mediates electron transfer between photosystem II (PSII) and photosystem I (PSI), cyclic electron flow around PSI, and state transitions. This Saccharum hybrid (Sugarcane) protein is Cytochrome f.